The following is a 301-amino-acid chain: ATP synthase gamma chain (301 aa).

This sequence belongs to the ATPase gamma chain family. As to quaternary structure, F-type ATPases have 2 components, CF(1) - the catalytic core - and CF(0) - the membrane proton channel. CF(1) has five subunits: alpha(3), beta(3), gamma(1), delta(1), epsilon(1). CF(0) has three main subunits: a, b and c.

It localises to the cell inner membrane. Its function is as follows. Produces ATP from ADP in the presence of a proton gradient across the membrane. The gamma chain is believed to be important in regulating ATPase activity and the flow of protons through the CF(0) complex. This Bordetella avium (strain 197N) protein is ATP synthase gamma chain.